Here is a 620-residue protein sequence, read N- to C-terminus: Ferric/cupric reductase transmembrane component 7 (620 aa).

At 1 to 45 (MIEERDLVLSNGIHCIADIHSELYARLKKESQAATPWVYQKQYGK) the chain is on the extracellular side. The chain crosses the membrane as a helical span at residues 46-66 (FVTYFVAVIIFLSLIKKLAFM). The Cytoplasmic segment spans residues 67 to 107 (YYDSSEEFLPEKKNSPTTPSVFLARIMTKLVAFNRYICYRK). A helical membrane pass occupies residues 108–128 (FPTLIFSYLGIPTSVGTFLVV). At 129–167 (MATTLYTLLYCFVPHPFYRPCAGFGSPPLSVRAGIMAIS) the chain is on the extracellular side. Residues 161–320 (AGIMAISLVP…LAVKGYLRPG (160 aa)) form the Ferric oxidoreductase domain. The helical transmembrane segment at 168-188 (LVPFVFSLSGKINVIGWLVGL) threads the bilayer. Residues 189-194 (SYEKIN) are Cytoplasmic-facing. The helical transmembrane segment at 195–215 (IYHQWASILCLFFSWVHVIPF) threads the bilayer. Heme is bound by residues His-197 and His-211. At 216 to 237 (LRQARHEGGYERMHQRWKASDM) the chain is on the extracellular side. Residues 238 to 258 (WRSGVPPILFLNLLWLSSLPI) form a helical membrane-spanning segment. Topologically, residues 259–265 (ARRHFYE) are cytoplasmic. Residues 266–286 (IFLQLHWILAVGFYISLFYHV) traverse the membrane as a helical segment. Heme is bound by residues His-271 and His-285. Over 287–292 (YPELNS) the chain is Extracellular. A helical transmembrane segment spans residues 293–313 (HMYLVATIVVWFAQLFYRLAV). Residues 314–620 (KGYLRPGRSF…CYLHSESFGY (307 aa)) lie on the Cytoplasmic side of the membrane. The FAD-binding FR-type domain occupies 321–419 (RSFMASTIAN…DGPYGGIERD (99 aa)). 369 to 375 (HPFSIFP) lines the FAD pocket. 411–414 (GPYG) provides a ligand contact to NADP(+). The segment at 519-543 (SDQSDLAKREKDTEFGQDDTESNST) is disordered. Residues 523–532 (DLAKREKDTE) are compositionally biased toward basic and acidic residues. 578–579 (CF) contacts NADP(+).

It belongs to the ferric reductase (FRE) family. FAD is required as a cofactor.

It is found in the cell membrane. The enzyme catalyses 2 a Fe(II)-siderophore + NADP(+) + H(+) = 2 a Fe(III)-siderophore + NADPH. Functionally, cell surface metalloreductase. May be involved in copper homeostasis. The protein is Ferric/cupric reductase transmembrane component 7 (FRE7) of Saccharomyces cerevisiae (strain ATCC 204508 / S288c) (Baker's yeast).